The sequence spans 309 residues: Pantothenate synthetase (309 aa).

T2 bears the N-acetylthreonine mark. 40–47 serves as a coordination point for ATP; sequence MGALHEGH. H47 functions as the Proton donor in the catalytic mechanism. Q72 is a binding site for (R)-pantoate. Q72 is a binding site for beta-alanine. Residues D88, D89, and Q92 each coordinate Mg(2+). Residue 158–161 coordinates ATP; it reads GEKD. Q164 is a (R)-pantoate binding site. Residues V187 and 195–198 each bind ATP; that span reads MSSR.

It belongs to the pantothenate synthetase family.

The protein resides in the cytoplasm. The enzyme catalyses (R)-pantoate + beta-alanine + ATP = (R)-pantothenate + AMP + diphosphate + H(+). Its pathway is cofactor biosynthesis; (R)-pantothenate biosynthesis; (R)-pantothenate from (R)-pantoate and beta-alanine: step 1/1. Pantothenate exhibits uncompetitive inhibition toward both D-pantoate and ATP, and non-competitive inhibition toward beta-alanine. AMPCPP exhibits competitive inhibition toward ATP, uncompetitive inhibition toward beta-alanine, and non-competitive inhibition toward D-pantoate. The enzyme is most active in the presence of magnesium or manganese. Other divalent cations (cobalt, nickel, zinc) are less effective. In terms of biological role, catalyzes the condensation of pantoate with beta-alanine in an ATP-dependent reaction via a pantoyl-adenylate intermediate. The chain is Pantothenate synthetase (panC) from Mycobacterium tuberculosis (strain ATCC 25618 / H37Rv).